Consider the following 422-residue polypeptide: Serine--tRNA ligase (422 aa).

Residues 1-20 (MHDLKSIRDNPDGFDAGLKR) form a disordered region. Residue 229–231 (TAE) coordinates L-serine. Residue 260-262 (RSE) participates in ATP binding. Glu283 contributes to the L-serine binding site. 347–350 (EISS) contributes to the ATP binding site. Residue Ser383 participates in L-serine binding.

Belongs to the class-II aminoacyl-tRNA synthetase family. Type-1 seryl-tRNA synthetase subfamily. In terms of assembly, homodimer. The tRNA molecule binds across the dimer.

Its subcellular location is the cytoplasm. It carries out the reaction tRNA(Ser) + L-serine + ATP = L-seryl-tRNA(Ser) + AMP + diphosphate + H(+). The catalysed reaction is tRNA(Sec) + L-serine + ATP = L-seryl-tRNA(Sec) + AMP + diphosphate + H(+). It functions in the pathway aminoacyl-tRNA biosynthesis; selenocysteinyl-tRNA(Sec) biosynthesis; L-seryl-tRNA(Sec) from L-serine and tRNA(Sec): step 1/1. In terms of biological role, catalyzes the attachment of serine to tRNA(Ser). Is also able to aminoacylate tRNA(Sec) with serine, to form the misacylated tRNA L-seryl-tRNA(Sec), which will be further converted into selenocysteinyl-tRNA(Sec). This is Serine--tRNA ligase from Paramagnetospirillum magneticum (strain ATCC 700264 / AMB-1) (Magnetospirillum magneticum).